Reading from the N-terminus, the 311-residue chain is Methionyl-tRNA formyltransferase (311 aa).

Residue 110–113 (SLLP) coordinates (6S)-5,6,7,8-tetrahydrofolate.

Belongs to the Fmt family.

The enzyme catalyses L-methionyl-tRNA(fMet) + (6R)-10-formyltetrahydrofolate = N-formyl-L-methionyl-tRNA(fMet) + (6S)-5,6,7,8-tetrahydrofolate + H(+). Its function is as follows. Attaches a formyl group to the free amino group of methionyl-tRNA(fMet). The formyl group appears to play a dual role in the initiator identity of N-formylmethionyl-tRNA by promoting its recognition by IF2 and preventing the misappropriation of this tRNA by the elongation apparatus. This chain is Methionyl-tRNA formyltransferase, found in Streptococcus mutans serotype c (strain ATCC 700610 / UA159).